The sequence spans 323 residues: Glyoxylate/hydroxypyruvate reductase HPR3 (323 aa).

NADP(+)-binding positions include 160–163 (LGSI), 182–184 (SRS), and 238–240 (VGR). Catalysis depends on residues R240 and E269. Catalysis depends on H287, which acts as the Proton donor. 287 to 289 (HFA) provides a ligand contact to NADP(+).

It belongs to the D-isomer specific 2-hydroxyacid dehydrogenase family. GyaR subfamily. As to quaternary structure, homodimer.

The catalysed reaction is glycolate + NADP(+) = glyoxylate + NADPH + H(+). The enzyme catalyses (R)-glycerate + NADP(+) = 3-hydroxypyruvate + NADPH + H(+). Its activity is regulated as follows. Inhibited by oxalate. Catalyzes the NADPH-dependent reduction of glyoxylate and hydroxypyruvate (HP) into glycolate and glycerate. Mostly active in the presence of NADPH and glyoxylate. The protein is Glyoxylate/hydroxypyruvate reductase HPR3 (HPR3) of Arabidopsis thaliana (Mouse-ear cress).